A 315-amino-acid polypeptide reads, in one-letter code: Glycine--tRNA ligase alpha subunit (315 aa).

It belongs to the class-II aminoacyl-tRNA synthetase family. As to quaternary structure, tetramer of two alpha and two beta subunits.

Its subcellular location is the cytoplasm. It carries out the reaction tRNA(Gly) + glycine + ATP = glycyl-tRNA(Gly) + AMP + diphosphate. This is Glycine--tRNA ligase alpha subunit from Pseudomonas syringae pv. tomato (strain ATCC BAA-871 / DC3000).